We begin with the raw amino-acid sequence, 267 residues long: Glutamate racemase (267 aa).

Substrate-binding positions include Asp-9–Ser-10 and Tyr-41–Ser-42. Residue Cys-73 is the Proton donor/acceptor of the active site. Asn-74–Thr-75 contributes to the substrate binding site. Cys-184 acts as the Proton donor/acceptor in catalysis. Thr-185–His-186 contributes to the substrate binding site.

This sequence belongs to the aspartate/glutamate racemases family.

It catalyses the reaction L-glutamate = D-glutamate. The protein operates within cell wall biogenesis; peptidoglycan biosynthesis. Functionally, provides the (R)-glutamate required for cell wall biosynthesis. The chain is Glutamate racemase from Glaesserella parasuis serovar 5 (strain SH0165) (Haemophilus parasuis).